The chain runs to 810 residues: MRISVNWLQSLVELNLSPEELGELLTIAGLEVEEIEDRRSWAAGVVLGRVISREKHPNADKLSVCVVDIGTEEPSTIVCGAANVRADILVPVATLGSYLPKVDLKIKPAKLRGVKSSGMICSLAELGLSKESEGIHIFPDLDLPSGSPVGPLLGLDDVILEISPTANRADALSMVGVAREVAALTGGKLSLPEIKAVSVSDQDLPISVTEPQACPTYVGTVIRGVKVGPSPDWLQQRLLAAGTRPINNVVDVTNYVLLEWGQPLHSFDQDKLQTLVGPEGFALGVRFAEEGEKLITLDDQERTLQPQNLLVTANDQPVAIAGVMGGAATEVDENTQNIVLETALFDGVTIRKSSKAINLRSESSTRYERGVNRCELEVALHRAIALMTELAGGTVVRQGKADQRQDRGEAIINLRLERLQQLLGKVNTPTGIGNITAEDVERILTDLGCGLTRQSDSDTPVWAVTVPSYRQRDIEREIDLIEEVARLYGYDHFCEQLPSNTIAGGLSPSYQAELALREACRGVGLTEVVHYSLVKPHGSEVMLANPLFAEYSALRTNLLDGLITAFANNQAQNNGALNAFEVGRVFWQNEGDIGEADHLAGICGGSQITEGTWPQGGKPQPMSWYDAKGLLEAIFQRLGATVTYSGDHQDPRLHPGRTALLSCNGTVLGRFGQLHPQLRREKGLIDEVYAFEITLTPLYQAMETQILGTPDFRPYSPYPAVARDLALYAPLELTVAELTQAMVKAGGDLLEQVELFDEYRGQSVPAGQRSLAFSLAYRVGDRTLTDADVEPLHNQIREALTKQFAVSLRS.

Residues 39-150 (RSWAAGVVLG…LDLPSGSPVG (112 aa)) form the tRNA-binding domain. The B5 domain occupies 407–495 (RGEAIINLRL…RLYGYDHFCE (89 aa)). Positions 473, 479, 482, and 483 each coordinate Mg(2+). Positions 716–809 (SPYPAVARDL…LTKQFAVSLR (94 aa)) constitute an FDX-ACB domain.

The protein belongs to the phenylalanyl-tRNA synthetase beta subunit family. Type 1 subfamily. In terms of assembly, tetramer of two alpha and two beta subunits. Mg(2+) serves as cofactor.

The protein localises to the cytoplasm. The catalysed reaction is tRNA(Phe) + L-phenylalanine + ATP = L-phenylalanyl-tRNA(Phe) + AMP + diphosphate + H(+). The polypeptide is Phenylalanine--tRNA ligase beta subunit (pheT) (Synechocystis sp. (strain ATCC 27184 / PCC 6803 / Kazusa)).